The primary structure comprises 228 residues: CD9 antigen (228 aa).

The Cytoplasmic segment spans residues 1 to 12 (MPVKGGTKCIKY). A lipid anchor (S-palmitoyl cysteine) is attached at Cys-9. A helical membrane pass occupies residues 13-33 (LLFGFNFIFWLAGIAVLAIGL). Residues 34–55 (WLRFDSQTKSIFEQETNNNNSS) are Extracellular-facing. 2 N-linked (GlcNAc...) asparagine glycosylation sites follow: Asn-52 and Asn-53. The chain crosses the membrane as a helical span at residues 56–76 (FYTGVYILIGAGALMMLVGFL). The Cytoplasmic segment spans residues 77 to 87 (GCCGAVQESQC). S-palmitoyl cysteine attachment occurs at residues Cys-78, Cys-79, and Cys-87. A helical transmembrane segment spans residues 88-111 (MLGLFFGFLLVIFAIEIAAAIWGY). Residues 112-195 (SHKDEVIKEV…KEVFDNKFHI (84 aa)) are Extracellular-facing. Disulfide bonds link Cys-152-Cys-181 and Cys-153-Cys-167. The helical transmembrane segment at 196–221 (IGAVGIGIAVVMIFGMIFSMILCCAI) threads the bilayer. 2 S-palmitoyl cysteine lipidation sites follow: Cys-218 and Cys-219. Residues 222–228 (RRNREMV) are Cytoplasmic-facing.

This sequence belongs to the tetraspanin (TM4SF) family. As to quaternary structure, forms both disulfide-linked homodimers and higher homooligomers as well as heterooligomers with other members of the tetraspanin family. Interacts (via the second extracellular domain) with integrin ITGAV:ITGB3. Interacts with integrin ITGA6:ITGB1; interaction takes place in oocytes and is involved in sperm-egg fusion. Part of integrin-tetraspanin complexes composed of CD81, beta-1 and beta-2 integrins in the membrane of monocyte/macrophages. Interacts with CD63; identified in a complex with CD63 and ITGB3. Associates with CR2/CD21 and with PTGFRN/CD9P1. Part of a complex composed of CD9, CD81, PTGFRN and IGSF8. Interacts directly with IGSF8. Interacts with PDPN; this interaction is homophilic and attenuates platelet aggregation and pulmonary metastasis induced by PDPN. Interacts (on T cell side) with CD81 at immunological synapses between antigen-presenting cells and T cells. Post-translationally, palmitoylated at a low, basal level in unstimulated platelets. The level of palmitoylation increases when platelets are activated by thrombin (in vitro). The protein exists in three forms with molecular masses between 22 and 27 kDa, and is known to carry covalently linked fatty acids. Palmitoylation by ZDHHC2 regulates CD9 expression, association with other tetraspanin family proteins and function in cell adhesion.

Its subcellular location is the cell membrane. It is found in the membrane. It localises to the secreted. The protein resides in the extracellular exosome. Integral membrane protein associated with integrins, which regulates different processes, such as sperm-egg fusion, platelet activation and aggregation, and cell adhesion. Present at the cell surface of oocytes and plays a key role in sperm-egg fusion, possibly by organizing multiprotein complexes and the morphology of the membrane required for the fusion. In myoblasts, associates with CD81 and PTGFRN and inhibits myotube fusion during muscle regeneration. In macrophages, associates with CD81 and beta-1 and beta-2 integrins, and prevents macrophage fusion into multinucleated giant cells specialized in ingesting complement-opsonized large particles. Also prevents the fusion between mononuclear cell progenitors into osteoclasts in charge of bone resorption. Acts as a receptor for PSG17. Involved in platelet activation and aggregation. Regulates paranodal junction formation. Involved in cell adhesion, cell motility and tumor metastasis. The polypeptide is CD9 antigen (Chlorocebus aethiops (Green monkey)).